We begin with the raw amino-acid sequence, 527 residues long: MSGDQGQAGAKRPIRRALISVYDKTGLIDLARGLHEAGVDIVSTGSTAKTIADKGIPVTPVEFVTGFPEVLDGRVKTLHPHIHAGLLADTRKPEHVEALAKLGIAPFDLVVVNLYPFSETVESGASVDECVEQIDIGGPSMVRAAAKNHPSVAVVVEPNGYDGVLAAVRTGGFTLAERKILASLAFRHTAEYDVAVASWMGSTLAPEEPAQKLPAWVGGTWRRAAVLRYGENPHQQAALYRDATAWPGLAQAEQLHGKEMSYNNYTDADAAWRAAFDHEEICVAIIKHANPCGIAISSVSVADAHRKAHECDPLSAFGGVIATNSSVSVEMAETVADIFTEVIVAPAYEPGAVEILSRKKNIRILVAAQPPTTGTELRPISGGLLLQQRDALDADGDDPVNWTLATGEPADPATLANLKFAWRSCRAVKSNAIVVVADGATVGVGMGQVNRVDAARLAVQRAGDRVRGAVAASDAFFPFPDGLETLTEAGVKAIVHPGGSMRDDVVTEAAAKAGISLYLTGARHFAH.

One can recognise an MGS-like domain in the interval 8–156 (AGAKRPIRRA…KNHPSVAVVV (149 aa)).

The protein belongs to the PurH family.

It carries out the reaction (6R)-10-formyltetrahydrofolate + 5-amino-1-(5-phospho-beta-D-ribosyl)imidazole-4-carboxamide = 5-formamido-1-(5-phospho-D-ribosyl)imidazole-4-carboxamide + (6S)-5,6,7,8-tetrahydrofolate. It catalyses the reaction IMP + H2O = 5-formamido-1-(5-phospho-D-ribosyl)imidazole-4-carboxamide. The protein operates within purine metabolism; IMP biosynthesis via de novo pathway; 5-formamido-1-(5-phospho-D-ribosyl)imidazole-4-carboxamide from 5-amino-1-(5-phospho-D-ribosyl)imidazole-4-carboxamide (10-formyl THF route): step 1/1. It functions in the pathway purine metabolism; IMP biosynthesis via de novo pathway; IMP from 5-formamido-1-(5-phospho-D-ribosyl)imidazole-4-carboxamide: step 1/1. This chain is Bifunctional purine biosynthesis protein PurH, found in Mycobacterium sp. (strain KMS).